We begin with the raw amino-acid sequence, 273 residues long: MLTKRIIPCLDVTLDRAGGCVVKGVEFVDLKEAGDPVELAKRYNEDGADELVFLDITASAHGRETMIDVIERTADEVFIPLTVGGGISSIDAIRQILRAGADKVSVNTSAVKNPDFIKESSDIFGAQCIVTAIDCRRNTDIKNNPDKTVLELEDGTPAWYEVVIYGGREATGIDAVQWAKKAEELGSGEILLTSMDRDGTCAGYDLPITRKLSEELDIPIIASGGVGNPQHIYEGFSEGKADAALAASIFHFSEYSIWEVKEYLREREIPVRL.

Active-site residues include Asp11 and Asp134.

This sequence belongs to the HisA/HisF family. As to quaternary structure, heterodimer of HisH and HisF.

Its subcellular location is the cytoplasm. It catalyses the reaction 5-[(5-phospho-1-deoxy-D-ribulos-1-ylimino)methylamino]-1-(5-phospho-beta-D-ribosyl)imidazole-4-carboxamide + L-glutamine = D-erythro-1-(imidazol-4-yl)glycerol 3-phosphate + 5-amino-1-(5-phospho-beta-D-ribosyl)imidazole-4-carboxamide + L-glutamate + H(+). Its pathway is amino-acid biosynthesis; L-histidine biosynthesis; L-histidine from 5-phospho-alpha-D-ribose 1-diphosphate: step 5/9. Functionally, IGPS catalyzes the conversion of PRFAR and glutamine to IGP, AICAR and glutamate. The HisF subunit catalyzes the cyclization activity that produces IGP and AICAR from PRFAR using the ammonia provided by the HisH subunit. This chain is Imidazole glycerol phosphate synthase subunit HisF, found in Methanosarcina acetivorans (strain ATCC 35395 / DSM 2834 / JCM 12185 / C2A).